We begin with the raw amino-acid sequence, 657 residues long: Translation factor GUF1, mitochondrial (657 aa).

A mitochondrion-targeting transit peptide spans 1-39 (MRGCLQSVKWLTSALRPSQSLASSTRYPRRLLSTSAPRN). One can recognise a tr-type G domain in the interval 59–239 (ERFRNFCIVA…TVIEQIPAPV (181 aa)). GTP contacts are provided by residues 68-75 (AHVDHGKS), 132-136 (DTPGH), and 186-189 (NKVD).

The protein belongs to the TRAFAC class translation factor GTPase superfamily. Classic translation factor GTPase family. LepA subfamily.

It is found in the mitochondrion inner membrane. The catalysed reaction is GTP + H2O = GDP + phosphate + H(+). Its function is as follows. Promotes mitochondrial protein synthesis. May act as a fidelity factor of the translation reaction, by catalyzing a one-codon backward translocation of tRNAs on improperly translocated ribosomes. Binds to mitochondrial ribosomes in a GTP-dependent manner. This chain is Translation factor GUF1, mitochondrial, found in Ajellomyces capsulatus (strain G186AR / H82 / ATCC MYA-2454 / RMSCC 2432) (Darling's disease fungus).